We begin with the raw amino-acid sequence, 676 residues long: Electrogenic aspartate/glutamate antiporter SLC25A12, mitochondrial (676 aa).

Position 2 is an N-acetylalanine (Ala2). Residues 2-293 (AVKVHTTKRG…TLADIERIAP (292 aa)) are regulatory N-terminal domain. Residues 2–328 (AVKVHTTKRG…WLQIAESAYR (327 aa)) lie on the Mitochondrial intermembrane side of the membrane. Residues Asp65, Thr67, Asp69, Leu71, and Glu76 each contribute to the Ca(2+) site. EF-hand domains are found at residues 65 to 76 (DQTKDGLISYQE), 86 to 121 (APDS…TIIH), 125 to 155 (PFNW…QFLQ), and 157 to 192 (LQLE…IRSH). The linker loop domain stretch occupies residues 294-309 (LAEGALPYNLAELQRQ). The interval 319–611 (WLQIAESAYR…RWFYIDFGGL (293 aa)) is carrier domain. 3 Solcar repeats span residues 323–415 (AESA…VRDK), 423–507 (IPLP…CKLL), and 515–603 (VGGI…LQRW). Residues 329-346 (FTLGSVAGAVGATAVYPI) traverse the membrane as a helical segment. Topologically, residues 347–389 (DLVKTRMQNQRGTGSVVGELMYKNSFDCFKKVLRYEGFFGLYR) are mitochondrial matrix. The chain crosses the membrane as a helical span at residues 390–409 (GLIPQLIGVAPEKAIKLTVN). Residues 410 to 432 (DFVRDKFTRRDGSIPLPAEILAG) are Mitochondrial intermembrane-facing. A helical transmembrane segment spans residues 433–446 (GCAGGSQVIFTNPL). Residues 447-481 (EIVKIRLQVAGEITTGPRVSALNVLQDLGLFGLYK) lie on the Mitochondrial matrix side of the membrane. A helical membrane pass occupies residues 482–501 (GAKACFLRDIPFSAIYFPVY). Over 502–520 (AHCKLLLADENGHVGGINL) the chain is Mitochondrial intermembrane. The helical transmembrane segment at 521–538 (LTAGAMAGVPAASLVTPA) threads the bilayer. Residues 539–577 (DVIKTRLQVAARAGQTTYSGVIDCFRKILREEGPSAFWK) are Mitochondrial matrix-facing. A helical membrane pass occupies residues 578 to 597 (GTAARVFRSSPQFGVTLVTY). Residues 598-676 (ELLQRWFYID…AQPKVAAAAQ (79 aa)) are Mitochondrial intermembrane-facing. The segment at 612-674 (KPSGSEPTPK…AAAQPKVAAA (63 aa)) is C-terminal domain.

This sequence belongs to the mitochondrial carrier (TC 2.A.29) family. In terms of assembly, homodimer (via N-terminus).

Its subcellular location is the mitochondrion inner membrane. It catalyses the reaction L-aspartate(in) + L-glutamate(out) + H(+)(out) = L-aspartate(out) + L-glutamate(in) + H(+)(in). The catalysed reaction is 3-sulfino-L-alanine(out) + L-glutamate(in) + H(+)(in) = 3-sulfino-L-alanine(in) + L-glutamate(out) + H(+)(out). It carries out the reaction 3-sulfino-L-alanine(out) + L-aspartate(in) = 3-sulfino-L-alanine(in) + L-aspartate(out). Its activity is regulated as follows. L-aspartate and 3-sulfino-L-alanine uptake are both inhibited by glisoxepide. In terms of biological role, mitochondrial electrogenic aspartate/glutamate antiporter that favors efflux of aspartate and entry of glutamate and proton within the mitochondria as part of the malate-aspartate shuttle. Also mediates the uptake of L-cysteinesulfinate (3-sulfino-L-alanine) by mitochondria in exchange of L-glutamate and proton. Can also exchange L-cysteinesulfinate with aspartate in their anionic form without any proton translocation. Lacks transport activity towards L-glutamine or gamma-aminobutyric acid (GABA). The protein is Electrogenic aspartate/glutamate antiporter SLC25A12, mitochondrial of Rattus norvegicus (Rat).